A 169-amino-acid polypeptide reads, in one-letter code: NADH-quinone oxidoreductase subunit B (169 aa).

Positions 42, 43, 107, and 136 each coordinate [4Fe-4S] cluster.

The protein belongs to the complex I 20 kDa subunit family. NDH-1 is composed of 14 different subunits. Subunits NuoB, C, D, E, F, and G constitute the peripheral sector of the complex. It depends on [4Fe-4S] cluster as a cofactor.

The protein resides in the cell inner membrane. It carries out the reaction a quinone + NADH + 5 H(+)(in) = a quinol + NAD(+) + 4 H(+)(out). Its function is as follows. NDH-1 shuttles electrons from NADH, via FMN and iron-sulfur (Fe-S) centers, to quinones in the respiratory chain. The immediate electron acceptor for the enzyme in this species is believed to be ubiquinone. Couples the redox reaction to proton translocation (for every two electrons transferred, four hydrogen ions are translocated across the cytoplasmic membrane), and thus conserves the redox energy in a proton gradient. In Nitratiruptor sp. (strain SB155-2), this protein is NADH-quinone oxidoreductase subunit B.